The chain runs to 364 residues: Peptide chain release factor 1 (364 aa).

At Q238 the chain carries N5-methylglutamine.

The protein belongs to the prokaryotic/mitochondrial release factor family. Post-translationally, methylated by PrmC. Methylation increases the termination efficiency of RF1.

It localises to the cytoplasm. Peptide chain release factor 1 directs the termination of translation in response to the peptide chain termination codons UAG and UAA. In Psychrobacter sp. (strain PRwf-1), this protein is Peptide chain release factor 1.